The primary structure comprises 685 residues: Probable serine/threonine-protein kinase CPE1738 (685 aa).

Residues 10–275 (YELLQCVGEG…LEKIKKDPNV (266 aa)) form the Protein kinase domain. ATP contacts are provided by residues 16 to 24 (VGEGGMSFV) and K39. E143 serves as the catalytic Proton acceptor. A disordered region spans residues 277-339 (ISSKSAEDED…NIQTKPQKAI (63 aa)). Positions 306–329 (EPDEDDEDDDEYYEDDEDEDEEEN) are enriched in acidic residues. PASTA domains follow at residues 376 to 440 (GKDV…TVSG), 441 to 508 (GEGQ…TISK), 513 to 581 (KSET…TINY), and 589 to 648 (EKPK…TMEE). The segment at 480 to 500 (VPRGEVISQSPNANESVDKGS) is disordered. The interval 623 to 685 (DTAKVKSVSN…PKQPEQSGNN (63 aa)) is disordered. Composition is skewed to low complexity over residues 627–645 (VKSV…VSVT) and 654–685 (QPTQ…SGNN).

Belongs to the protein kinase superfamily. Ser/Thr protein kinase family.

The enzyme catalyses L-seryl-[protein] + ATP = O-phospho-L-seryl-[protein] + ADP + H(+). It carries out the reaction L-threonyl-[protein] + ATP = O-phospho-L-threonyl-[protein] + ADP + H(+). The sequence is that of Probable serine/threonine-protein kinase CPE1738 from Clostridium perfringens (strain 13 / Type A).